A 451-amino-acid chain; its full sequence is Medium-chain fatty acid ethyl ester synthase/esterase 2 (451 aa).

Residue lysine 114 forms a Glycyl lysine isopeptide (Lys-Gly) (interchain with G-Cter in ubiquitin) linkage. The AB hydrolase-1 domain occupies proline 166–aspartate 430. Catalysis depends on charge relay system residues serine 247, aspartate 395, and histidine 423.

This sequence belongs to the AB hydrolase superfamily. AB hydrolase 4 family.

The enzyme catalyses an aliphatic alcohol + acetyl-CoA = an acetyl ester + CoA. Its function is as follows. Displays enzymatic activity both for medium-chain fatty acid (MCFA) ethyl ester synthesis and hydrolysis (esterase activity). MCFA are toxic for yeast and this enzyme could thus be involved in their detoxification by esterification. This chain is Medium-chain fatty acid ethyl ester synthase/esterase 2 (EHT1), found in Saccharomyces cerevisiae (strain ATCC 204508 / S288c) (Baker's yeast).